A 514-amino-acid chain; its full sequence is 6-phosphofructo-2-kinase/fructose-2,6-bisphosphatase 3 (514 aa).

Residues Met1–Gln245 are 6-phosphofructo-2-kinase. Gly42–Tyr50 contributes to the ATP binding site. Arg75 and Arg99 together coordinate beta-D-fructose 6-phosphate. Asp125 is a catalytic residue. Beta-D-fructose 6-phosphate-binding residues include Thr127 and Arg133. Cys155 is a catalytic residue. Asn164–Lys169 serves as a coordination point for ATP. Residues Lys169, Arg190, and Tyr194 each contribute to the beta-D-fructose 6-phosphate site. The interval Pro246–Thr514 is fructose-2,6-bisphosphatase. Arg253 serves as a coordination point for beta-D-fructose 2,6-bisphosphate. His254 (tele-phosphohistidine intermediate) is an active-site residue. Asn260 and Gly266 together coordinate beta-D-fructose 2,6-bisphosphate. The Proton donor/acceptor role is filled by Glu323. Residues Tyr334, Arg348, Lys352, Tyr363, Gln389, and Arg393 each coordinate beta-D-fructose 2,6-bisphosphate. Tyr345–Arg348 provides a ligand contact to ATP. Residues Gln389–Arg393 and Tyr425 contribute to the ATP site. Positions Glu444–Arg475 are disordered. Position 461 is a phosphoserine; by AMPK and PKA (Ser461). Position 463 is a phosphothreonine (Thr463). Ser467 is subject to Phosphoserine. Thr471 is subject to Phosphothreonine; by PKC.

The protein in the C-terminal section; belongs to the phosphoglycerate mutase family. In terms of assembly, homodimer. Forms a heterodimer with PFKFB2. Phosphorylation by AMPK stimulates activity.

The enzyme catalyses beta-D-fructose 2,6-bisphosphate + H2O = beta-D-fructose 6-phosphate + phosphate. The catalysed reaction is beta-D-fructose 6-phosphate + ATP = beta-D-fructose 2,6-bisphosphate + ADP + H(+). In terms of biological role, catalyzes both the synthesis and degradation of fructose 2,6-bisphosphate. In Pongo abelii (Sumatran orangutan), this protein is 6-phosphofructo-2-kinase/fructose-2,6-bisphosphatase 3 (PFKFB3).